Consider the following 421-residue polypeptide: Diaminobutyrate--2-oxoglutarate transaminase (421 aa).

Residue K262 is modified to N6-(pyridoxal phosphate)lysine.

It belongs to the class-III pyridoxal-phosphate-dependent aminotransferase family. It depends on pyridoxal 5'-phosphate as a cofactor.

The enzyme catalyses L-2,4-diaminobutanoate + 2-oxoglutarate = L-aspartate 4-semialdehyde + L-glutamate. The protein operates within amine and polyamine biosynthesis; ectoine biosynthesis; L-ectoine from L-aspartate 4-semialdehyde: step 1/3. Catalyzes reversively the conversion of L-aspartate beta-semialdehyde (ASA) to L-2,4-diaminobutyrate (DABA) by transamination with L-glutamate. This chain is Diaminobutyrate--2-oxoglutarate transaminase (ectB), found in Vibrio parahaemolyticus serotype O3:K6 (strain RIMD 2210633).